A 415-amino-acid polypeptide reads, in one-letter code: Protein ROH1A (415 aa).

The disordered stretch occupies residues 184-219 (VSGGGGGGGGGNKTTERSWSFGRRSGGSSAASKGGA). A compositionally biased stretch (gly residues) spans 185-195 (SGGGGGGGGGN). Positions 200–219 (RSWSFGRRSGGSSAASKGGA) are enriched in low complexity. The helical transmembrane segment at 263–283 (MFIMSTVMVFVMWVLTAAVPC) threads the bilayer.

The protein belongs to the ROH1 family. Interacts with EXO70A1 and EXO70C1. Binds to EXO70C2. In terms of tissue distribution, mainly expressed in cells expanding in a polar manner such as pollen and root hairs.

The protein resides in the membrane. Its subcellular location is the cytoplasm. The protein localises to the cytosol. Required for seed coat mucilage deposition. The sequence is that of Protein ROH1A from Arabidopsis thaliana (Mouse-ear cress).